A 403-amino-acid chain; its full sequence is Semaphorin-like protein A39 (403 aa).

An N-terminal signal peptide occupies residues 1 to 14; the sequence is MIPLLFILFYFANG. One can recognise a Sema domain in the interval 15 to 403; sequence IEWHKFETSE…MPQMKKILKM (389 aa).

Belongs to the semaphorin family. As to quaternary structure, interacts with host VESPR.

It is found in the secreted. Acts as a semaphorin-like protein and binds to host plexin C1 receptor. May alter the movement of host plexin C1-expressing cells including dendritic cells, monocytes, or granulocytes in the proximity of infected cells. May also regulate host cell cytoskeleton of neighboring cells to improve viral infection. The chain is Semaphorin-like protein A39 from Homo sapiens (Human).